The chain runs to 301 residues: Cell division protein kinase 2 homolog CRK1 (301 aa).

The region spanning 5-297 (YERQEKIGEG…AADALNHPYF (293 aa)) is the Protein kinase domain. ATP-binding positions include 11 to 19 (IGEGTYGVV) and lysine 34. The Proton acceptor role is filled by aspartate 127. At threonine 160 the chain carries Phosphothreonine; by CAK.

The protein belongs to the protein kinase superfamily. CMGC Ser/Thr protein kinase family. CDC2/CDKX subfamily. In terms of assembly, forms a stable but non-covalent complex with a regulatory subunit and with a cyclin.

It catalyses the reaction [DNA-directed RNA polymerase] + ATP = phospho-[DNA-directed RNA polymerase] + ADP + H(+). Its activity is regulated as follows. Phosphorylation at Thr-15 or Tyr-16 inactivates the enzyme, while phosphorylation at Thr-160 activates it. Functionally, may be involved in some stage-specific role in the promastigote cell cycle. The sequence is that of Cell division protein kinase 2 homolog CRK1 (CRK1) from Leishmania mexicana.